Reading from the N-terminus, the 589-residue chain is MTISSAHPETEPKWWKEATIYQIYPASFKDSNNDGWGDMKGIASKLEYIKELGADAIWISPFYDSPQDDMGYDIANYEKVWPTYGTNEDCFALIEKTHKLGMKFITDLVINHCSSEHEWFKESRSSKTNPKRDWFFWRPPKGYDAEGKPIPPNNWRSYFGGSAWTFDEKTQEFYLRLFCSTQPDLNWENEDCRKAIYESAVGYWLDHGVDGFRIDVGSLYSKVAGLPDAPVIDENSKWQPSDPFTMNGPRIHEFHQEMNKFIRNRVKDGREIMTVGEMQHATDETKRLYTSASRHELSELFNFSHTDVGTSPKFRQNLIPYELKDWKVALAELFRYVNGTDCWSTIYLENHDQPRSITRFGDDSPKNRVISGKLLSVLLVSLSGTLYVYQGQELGEINFKNWPIEKYEDVEVRNNYDAIKEEHGENSKEMKRFLEAIALISRDHARTPMQWSREEPNAGFSGPNAKPWFYLNESFREGINAEDESKDPNSVLNFWKEALRFRKAHKDITVYGYDFEFIDLDNKKLFSFTKKYDNKTLFAALNFSSDSIDFTIPNNSSSFKLEFGNYPRSEVDASSRTLKPWEGRIYISE.

Asp215 acts as the Nucleophile in catalysis. Residue Glu277 is the Proton donor of the active site.

The protein belongs to the glycosyl hydrolase 13 family.

The enzyme catalyses Hydrolysis of (1-&gt;6)-alpha-D-glucosidic linkages in some oligosaccharides produced from starch and glycogen by alpha-amylase, and in isomaltose.. Functionally, alpha-glucosidase with specificity for isomaltase, methyl-alpha-glucoside, and palatinose. This chain is Oligo-1,6-glucosidase IMA2 (IMA2), found in Saccharomyces cerevisiae (strain ATCC 204508 / S288c) (Baker's yeast).